Here is a 108-residue protein sequence, read N- to C-terminus: DIVMTQTPLSLSVSPGEPASISCRSSQSNLDYLNWYLQKAGQSPRLLPEQDSQRASGVPDRFSGSGSGTDFTLRIGRVEAEDAGIYYCMQRSFYPYTFGQGTRLEVRR.

Residues 1–23 (DIVMTQTPLSLSVSPGEPASISC) are framework-1. Cysteines 23 and 88 form a disulfide. Residues 24 to 34 (RSSQSNLDYLN) form a complementarity-determining-1 region. A framework-2 region spans residues 35–49 (WYLQKAGQSPRLLPE). The disordered stretch occupies residues 44–66 (PRLLPEQDSQRASGVPDRFSGSG). Residues 50–56 (QDSQRAS) form a complementarity-determining-2 region. The tract at residues 57–88 (GVPDRFSGSGSGTDFTLRIGRVEAEDAGIYYC) is framework-3. The tract at residues 89–97 (MQRSFYPYT) is complementarity-determining-3. A framework-4 region spans residues 98-107 (FGQGTRLEVR).

In Canis lupus familiaris (Dog), this protein is Ig kappa chain V region GOM.